A 135-amino-acid chain; its full sequence is C-type lectin PAL (135 aa).

4 disulfide bridges follow: cysteine 3–cysteine 14, cysteine 31–cysteine 131, cysteine 38–cysteine 133, and cysteine 106–cysteine 123. The C-type lectin domain occupies 10-132; that stretch reads MNGLCYKIFD…CGSKNAFLCQ (123 aa). Positions 96, 98, 104, 119, and 120 each coordinate Ca(2+). Residues 96–98 carry the Galactose-binding motif; the sequence is QPD.

This sequence belongs to the true venom lectin family. Homodimer; disulfide-linked. Expressed by the venom gland.

The protein localises to the secreted. Functionally, galactose-binding lectin which recognizes specific carbohydrate structures and agglutinates a variety of animal cells by binding to cell-surface glycoproteins and glycolipids. This is a calcium-dependent lectin. Shows high hemagglutinating activity (MHC is 0.25 ug/ml on rabbit erythrocytes). The polypeptide is C-type lectin PAL (Bitis arietans (African puff adder)).